The primary structure comprises 461 residues: MSLDIQSLDIQCEELSDARWAELLPLLQQCQVVRLDDCGLTEARCKDISSALRVNPALAELNLRSNELGDVGVHCVLQGLQSPSCKIQKLSLQNCCLTGAGCGVLSSTLRTLPTLQELHLSDNLLGDAGLQLLCEGLLDPQCRLEKLQLEYCNLSAASCKPLASVLRAKPDFKELTVSNNDINEAGVRVLCQGLKDSPCQLEALKLESCGVTSDNCRDLCGIVASKASLRELALGSNKLGDVGMAELCPGLLHPSSRLRTLWIWECGITAKGCGDLCRVLRAKESLKELSLAGNELGDEGARLLCETLLEPGCQLESLWVKSCSFTAACCSHFSSVLAQNKFLLELQISNNRLEDAGVQELCQGLGQPGSVLRVLWLADCDVSDSSCSSLAATLLANHSLRELDLSNNCLGDAGILQLVESVRQPGCLLEQLVLYDIYWSEEMEDRLQALEKDKPSLRVIS.

Ser2 bears the N-acetylserine mark. The segment at 2-11 is 2 X 5 AA tandem repeats of S-L-D-I-Q; that stretch reads SLDIQSLDIQ. LRR repeat units follow at residues 20–48, 49–76, 77–105, 106–133, 134–162, 163–190, 191–219, 220–247, 248–276, 277–304, 305–333, 334–361, 362–390, 391–418, and 419–447; these read WAEL…CKDI, SSAL…VHCV, LQGL…CGVL, SSTL…LQLL, CEGL…CKPL, ASVL…VRVL, CQGL…CRDL, CGIV…MAEL, CPGL…CGDL, CRVL…ARLL, CETL…CSHF, SSVL…VQEL, CQGL…CSSL, AATL…ILQL, and VESV…EDRL. At Ser91 the chain carries Phosphoserine.

Forms high-affinity heterodimers with RNASE1, ANG and RNASE2.

The protein resides in the cytoplasm. The protein localises to the nucleus. Functionally, ribonuclease inhibitor which inhibits RNASE1, RNASE2 and angiogenin (ANG). May play a role in redox homeostasis. Required to inhibit the cytotoxic tRNA ribonuclease activity of ANG in the cytoplasm in absence of stress. Relocates to the nucleus in response to stress, relieving inhibition of ANG in the cytoplasm, and inhibiting the angiogenic activity of ANG in the nucleus. This chain is Ribonuclease inhibitor (RNH1), found in Pan troglodytes (Chimpanzee).